The primary structure comprises 179 residues: Large ribosomal subunit protein uL5 (179 aa).

This sequence belongs to the universal ribosomal protein uL5 family. Part of the 50S ribosomal subunit; part of the 5S rRNA/L5/L18/L25 subcomplex. Contacts the 5S rRNA and the P site tRNA. Forms a bridge to the 30S subunit in the 70S ribosome.

Its function is as follows. This is one of the proteins that bind and probably mediate the attachment of the 5S RNA into the large ribosomal subunit, where it forms part of the central protuberance. In the 70S ribosome it contacts protein S13 of the 30S subunit (bridge B1b), connecting the 2 subunits; this bridge is implicated in subunit movement. Contacts the P site tRNA; the 5S rRNA and some of its associated proteins might help stabilize positioning of ribosome-bound tRNAs. This chain is Large ribosomal subunit protein uL5, found in Solidesulfovibrio magneticus (strain ATCC 700980 / DSM 13731 / RS-1) (Desulfovibrio magneticus).